Consider the following 314-residue polypeptide: Methionyl-tRNA formyltransferase (314 aa).

112–115 (SLLP) provides a ligand contact to (6S)-5,6,7,8-tetrahydrofolate.

This sequence belongs to the Fmt family.

The enzyme catalyses L-methionyl-tRNA(fMet) + (6R)-10-formyltetrahydrofolate = N-formyl-L-methionyl-tRNA(fMet) + (6S)-5,6,7,8-tetrahydrofolate + H(+). Attaches a formyl group to the free amino group of methionyl-tRNA(fMet). The formyl group appears to play a dual role in the initiator identity of N-formylmethionyl-tRNA by promoting its recognition by IF2 and preventing the misappropriation of this tRNA by the elongation apparatus. The protein is Methionyl-tRNA formyltransferase of Buchnera aphidicola subsp. Acyrthosiphon pisum (strain 5A).